We begin with the raw amino-acid sequence, 1141 residues long: Myosin-binding protein C, slow-type (1141 aa).

The segment covering 1–10 (MPEPTKKEEN) has biased composition (basic and acidic residues). Residues 1-51 (MPEPTKKEENEVPAPAPPPEEPSKEKEAGTTPAKDWTLVETPPGEEQAKQN) are disordered. 5 Ig-like C2-type domains span residues 72–144 (GEDI…RCEV), 251–340 (SAAF…VREP), 341–431 (PIMV…VDLK), 432–520 (PLKI…HVID), and 522–619 (PKII…VVDF). T406 is modified (phosphothreonine). S611 is subject to Phosphoserine. Fibronectin type-III domains are found at residues 622-721 (PPVA…TSPP) and 722-833 (TLLT…VKEI). T798 is subject to Phosphothreonine. A Phosphotyrosine modification is found at Y823. The Ig-like C2-type 6 domain occupies 837–931 (PKIRIPRHLK…ASIDIQIIDR (95 aa)). In terms of domain architecture, Fibronectin type-III 3 spans 934–1029 (PPQIVKIEDV…TKESAVIARD (96 aa)). One can recognise an Ig-like C2-type 7 domain in the interval 1047-1141 (PMFTQPLVNT…CKLEVKVIAQ (95 aa)).

This sequence belongs to the immunoglobulin superfamily. MyBP family. Interacts with USP25 (isoform USP25m only); the interaction prevents proteasomal degradation of MYBPC1.

Functionally, thick filament-associated protein located in the crossbridge region of vertebrate striated muscle a bands. Slow skeletal protein that binds to both myosin and actin. In vitro, binds to native thin filaments and modifies the activity of actin-activated myosin ATPase. May modulate muscle contraction or may play a more structural role. The chain is Myosin-binding protein C, slow-type (MYBPC1) from Homo sapiens (Human).